Consider the following 147-residue polypeptide: UPF0735 ACT domain-containing protein YszB (147 aa).

The ACT domain maps to 70–145; the sequence is TLFFHLEDRS…FVEKVEILGS (76 aa).

Belongs to the UPF0735 family.

This chain is UPF0735 ACT domain-containing protein YszB (yszB), found in Bacillus subtilis (strain 168).